A 386-amino-acid polypeptide reads, in one-letter code: bHLH transcription factor RHL1 (386 aa).

The interval 119–186 (FTGSLNGTQP…RRGQATDPHS (68 aa)) is disordered. Residues 127–137 (QPQQHFQHPPQ) show a composition bias toward low complexity. Residues 138-151 (GNSNQIQGQNFGAT) show a composition bias toward polar residues. The interval 180-193 (QATDPHSIAERLRR) is basic motif; degenerate. A bHLH domain is found at 180–229 (QATDPHSIAERLRRERIAERMKALQELVPNANKTDKASMLDEIIDYVKFL). The interval 194 to 229 (ERIAERMKALQELVPNANKTDKASMLDEIIDYVKFL) is helix-loop-helix motif.

As to expression, expressed in root epidermal cells.

It localises to the nucleus. Its function is as follows. Transcription factor that regulates the development of root hairs. The sequence is that of bHLH transcription factor RHL1 from Lotus japonicus (Lotus corniculatus var. japonicus).